The following is a 311-amino-acid chain: L-lactate dehydrogenase (311 aa).

NAD(+)-binding positions include V12, D33, K38, Y63, and 77-78 (GA). Substrate contacts are provided by Q80 and R86. Residues S99, 116-118 (VTN), and S141 each bind NAD(+). 118 to 121 (NPVD) provides a ligand contact to substrate. 146–149 (DSSR) provides a ligand contact to substrate. Beta-D-fructose 1,6-bisphosphate contacts are provided by R151 and H166. The active-site Proton acceptor is the H173. Residue Y219 is modified to Phosphotyrosine. Residue T228 coordinates substrate.

It belongs to the LDH/MDH superfamily. LDH family. Homotetramer.

It is found in the cytoplasm. It carries out the reaction (S)-lactate + NAD(+) = pyruvate + NADH + H(+). The protein operates within fermentation; pyruvate fermentation to lactate; (S)-lactate from pyruvate: step 1/1. Allosterically activated by fructose 1,6-bisphosphate (FBP). In terms of biological role, catalyzes the conversion of lactate to pyruvate. In Thermoanaerobacterium saccharolyticum (strain DSM 8691 / JW/SL-YS485), this protein is L-lactate dehydrogenase.